The primary structure comprises 91 residues: Large ribosomal subunit protein bL31B-1 (91 aa).

The protein belongs to the bacterial ribosomal protein bL31 family. Type B subfamily. Part of the 50S ribosomal subunit.

The polypeptide is Large ribosomal subunit protein bL31B-1 (Streptomyces avermitilis (strain ATCC 31267 / DSM 46492 / JCM 5070 / NBRC 14893 / NCIMB 12804 / NRRL 8165 / MA-4680)).